We begin with the raw amino-acid sequence, 315 residues long: ATP synthase gamma chain (315 aa).

This sequence belongs to the ATPase gamma chain family. In terms of assembly, F-type ATPases have 2 components, CF(1) - the catalytic core - and CF(0) - the membrane proton channel. CF(1) has five subunits: alpha(3), beta(3), gamma(1), delta(1), epsilon(1). CF(0) has three main subunits: a, b and c.

It is found in the cellular thylakoid membrane. Produces ATP from ADP in the presence of a proton gradient across the membrane. The gamma chain is believed to be important in regulating ATPase activity and the flow of protons through the CF(0) complex. The sequence is that of ATP synthase gamma chain from Microcystis aeruginosa (strain NIES-843 / IAM M-2473).